A 546-amino-acid chain; its full sequence is Elongator complex protein 3 (546 aa).

Residues 81-371 (RTASGIAVVA…YRVQRDIPMP (291 aa)) enclose the Radical SAM core domain. Residues C98, C108, and C111 each contribute to the [4Fe-4S] cluster site. Residues K163, 473–476 (ELHV), 496–498 (FGM), and Y529 contribute to the acetyl-CoA site. Residues 395-546 (TQCRDVRTRE…EGPYMVKRLQ (152 aa)) enclose the N-acetyltransferase domain.

Belongs to the ELP3 family. Component of the elongator complex. It depends on [4Fe-4S] cluster as a cofactor.

Its subcellular location is the cytoplasm. It is found in the nucleus. The catalysed reaction is uridine(34) in tRNA + acetyl-CoA + S-adenosyl-L-methionine + H2O = 5-(carboxymethyl)uridine(34) in tRNA + 5'-deoxyadenosine + L-methionine + CoA + 2 H(+). It functions in the pathway tRNA modification; 5-methoxycarbonylmethyl-2-thiouridine-tRNA biosynthesis. In terms of biological role, catalytic tRNA acetyltransferase subunit of the elongator complex which is required for multiple tRNA modifications, including mcm5U (5-methoxycarbonylmethyl uridine), mcm5s2U (5-methoxycarbonylmethyl-2-thiouridine), and ncm5U (5-carbamoylmethyl uridine). In the elongator complex, acts as a tRNA uridine(34) acetyltransferase by mediating formation of carboxymethyluridine in the wobble base at position 34 in tRNAs. The chain is Elongator complex protein 3 from Gallus gallus (Chicken).